Here is a 240-residue protein sequence, read N- to C-terminus: Hairy and enhancer of split-related protein HELT (240 aa).

Residues 10-65 (RTPVSHKVIEKRRRDRINRCLNELGKTVPMALAKQSSGKLEKAEILEMTVQYLRAL) form the bHLH domain. The residue at position 48 (Lys48) is an N6-acetyllysine. The region spanning 86-121 (FHYGYHECMKNLVHYLTTVERMETKDTKYARILAFL) is the Orange domain.

The protein belongs to the HEY family. Self-associates. Interacts with HES5 and HEY2. As to expression, expressed in heart and testis.

The protein resides in the nucleus. Functionally, transcriptional repressor which binds preferentially to the canonical E box sequence 5'-CACGCG-3'. Required for the development of GABAergic neurons. In Mus musculus (Mouse), this protein is Hairy and enhancer of split-related protein HELT (Helt).